A 254-amino-acid polypeptide reads, in one-letter code: Decaprenylphosphoryl-2-keto-beta-D-erythro-pentose reductase (254 aa).

Asp67 lines the NAD(+) pocket. Catalysis depends on Tyr160, which acts as the Proton acceptor. Lys164 contributes to the NAD(+) binding site.

This sequence belongs to the short-chain dehydrogenases/reductases (SDR) family. Interacts with DprE1 to form an epimerase complex.

The protein localises to the periplasm. It carries out the reaction trans,octa-cis-decaprenylphospho-beta-D-arabinofuranose + NAD(+) = trans,octa-cis-decaprenylphospho-beta-D-erythro-pentofuranosid-2-ulose + NADH + H(+). It participates in cell wall biogenesis; cell wall polysaccharide biosynthesis. Its function is as follows. Component of the DprE1-DprE2 complex that catalyzes the 2-step epimerization of decaprenyl-phospho-ribose (DPR) to decaprenyl-phospho-arabinose (DPA), a key precursor that serves as the arabinose donor required for the synthesis of cell-wall arabinans. DprE1 catalyzes the first step of epimerization, namely FAD-dependent oxidation of the C2' hydroxyl of DPR to yield the keto intermediate decaprenyl-phospho-2'-keto-D-arabinose (DPX). The intermediate DPX is then transferred to DprE2 subunit of the epimerase complex, most probably through a 'substrate channel' at the interface of DprE1-DprE2 complex. DprE2 then catalyzes the second step of epimerization, the NAD(+)-dependent reduction of DPX that leads to the formation of DPA. In Mycolicibacterium smegmatis (strain ATCC 700084 / mc(2)155) (Mycobacterium smegmatis), this protein is Decaprenylphosphoryl-2-keto-beta-D-erythro-pentose reductase.